Reading from the N-terminus, the 541-residue chain is Light-independent protochlorophyllide reductase subunit B (541 aa).

D36 lines the [4Fe-4S] cluster pocket. D290 acts as the Proton donor in catalysis. 425–426 lines the substrate pocket; it reads GL.

The protein belongs to the ChlB/BchB/BchZ family. As to quaternary structure, protochlorophyllide reductase is composed of three subunits; ChlL, ChlN and ChlB. Forms a heterotetramer of two ChlB and two ChlN subunits. [4Fe-4S] cluster serves as cofactor.

It catalyses the reaction chlorophyllide a + oxidized 2[4Fe-4S]-[ferredoxin] + 2 ADP + 2 phosphate = protochlorophyllide a + reduced 2[4Fe-4S]-[ferredoxin] + 2 ATP + 2 H2O. It functions in the pathway porphyrin-containing compound metabolism; chlorophyll biosynthesis (light-independent). In terms of biological role, component of the dark-operative protochlorophyllide reductase (DPOR) that uses Mg-ATP and reduced ferredoxin to reduce ring D of protochlorophyllide (Pchlide) to form chlorophyllide a (Chlide). This reaction is light-independent. The NB-protein (ChlN-ChlB) is the catalytic component of the complex. This is Light-independent protochlorophyllide reductase subunit B from Synechococcus sp. (strain CC9902).